We begin with the raw amino-acid sequence, 204 residues long: MAYMNRSDLDKLKHENIFSGNIIEDAKEFVFGSRKIYTDSVDDLIELYSLAKYLNNENLKDVVIERMDYVCKYIGKDNWSTIYSFYKENGLRNSFLRQYINNNIEEICNTDQFLKLDVDSVCDILDNDEIVVTREYTILNMVLRWLENKRVNIDDFTKVMFVIRFKFITYSELTNAIEKIAPEYRQCLQDLYHMKITRPRHFDN.

One can recognise a BACK domain in the interval 95 to 177 (FLRQYINNNI…ITYSELTNAI (83 aa)).

Belongs to the orthopoxvirus OPG030 family.

The polypeptide is Protein OPG030 (OPG30) (Homo sapiens (Human)).